The primary structure comprises 614 residues: Fem-3 mRNA-binding factor 1 (614 aa).

The span at 1–24 shows a compositional bias: polar residues; the sequence is MDQSKMRYTNQFRKTPQKPTSTEV. The tract at residues 1-34 is disordered; it reads MDQSKMRYTNQFRKTPQKPTSTEVGNHHTPAHSP. The 405-residue stretch at 160–564 folds into the PUM-HD domain; it reads TRSNNVLPTW…KMIETLAHLR (405 aa). Pumilio repeat units follow at residues 185 to 223, 224 to 263, 269 to 305, 306 to 342, 343 to 382, 398 to 434, 436 to 471, and 483 to 519; these read EVLD…QLFE, QVIG…NIKR, NFIS…KLVQ, ALPR…EFIV, DFVA…DLTS, SVTN…CIIE, CLMR…EMMD, and TGKD…RQTK. A binding to gld-3 isoform A region spans residues 283–614; that stretch reads FACRVIQSSL…NLRLMRTFSP (332 aa).

Interacts (via C-terminus) with gld-3 isoform A in an RNA-independent manner. As to expression, expressed specifically in the germline (at protein level).

The protein resides in the cytoplasm. RNA-binding protein that binds to the consensus sequence 5'-UGUGCCAUA-3' in mRNA 3'-UTRs. Involved in the control of stem cells and sex determination in the C.elegans hermaphrodite germline. May also play a role in the hermaphrodite germline proliferation and oogenesis. Binds specifically to the regulatory region of fem-3 3'-UTR and mediates the sperm/oocyte switch. Negatively regulates gld-3 expression, possibly by directly binding to two sites within the 3'-UTR of gld-3 isoform b. In association with the cye-1/cdk-2 complex, negatively regulates gld-1 expression in the distal germline cells of the mitotic zone. By binding to the 3'-UTR, represses phosphatase lip-1 expression in the distal part of the germline mitotic zone. Suppresses germline tumor formation by preventing the dedifferentiation of secondary spermatocytes. This Caenorhabditis elegans protein is Fem-3 mRNA-binding factor 1 (fbf-1).